The primary structure comprises 207 residues: Small ribosomal subunit protein uS4c (207 aa).

Positions 92 to 155 (MRLDNILFRL…TYQSILSKRI (64 aa)) constitute an S4 RNA-binding domain.

The protein belongs to the universal ribosomal protein uS4 family. As to quaternary structure, part of the 30S ribosomal subunit. Contacts protein S5. The interaction surface between S4 and S5 is involved in control of translational fidelity.

The protein localises to the plastid. The protein resides in the chloroplast. One of the primary rRNA binding proteins, it binds directly to 16S rRNA where it nucleates assembly of the body of the 30S subunit. Its function is as follows. With S5 and S12 plays an important role in translational accuracy. This chain is Small ribosomal subunit protein uS4c (rps4), found in Equisetum scirpoides (Dwarf-scouring rush).